The sequence spans 172 residues: Ribosome maturation factor RimM (172 aa).

The PRC barrel domain occupies 96-168; it reads DGEFYYHEII…RIEVELMEGL (73 aa).

This sequence belongs to the RimM family. In terms of assembly, binds ribosomal protein uS19.

The protein localises to the cytoplasm. An accessory protein needed during the final step in the assembly of 30S ribosomal subunit, possibly for assembly of the head region. Essential for efficient processing of 16S rRNA. May be needed both before and after RbfA during the maturation of 16S rRNA. It has affinity for free ribosomal 30S subunits but not for 70S ribosomes. The protein is Ribosome maturation factor RimM of Streptococcus thermophilus (strain ATCC BAA-491 / LMD-9).